Reading from the N-terminus, the 311-residue chain is Probable manganese-dependent inorganic pyrophosphatase (311 aa).

The Mn(2+) site is built by His-9, Asp-13, Asp-15, Asp-77, His-99, and Asp-151.

Belongs to the PPase class C family. Mn(2+) serves as cofactor.

Its subcellular location is the cytoplasm. The catalysed reaction is diphosphate + H2O = 2 phosphate + H(+). In Streptococcus suis (strain 98HAH33), this protein is Probable manganese-dependent inorganic pyrophosphatase.